The primary structure comprises 473 residues: Dol-P-Glc:Glc(2)Man(9)GlcNAc(2)-PP-Dol alpha-1,2-glucosyltransferase (473 aa).

Residues 1 to 6 (MAQLEG) are Cytoplasmic-facing. Residues 7–27 (YCFSAALSCTFLVSCLLFSAF) traverse the membrane as a helical segment. Residues 28-64 (SRALREPYMDEIFHLPQAQRYCEGHFSLSQWDPMITT) lie on the Extracellular side of the membrane. The chain crosses the membrane as a helical span at residues 65–85 (LPGLYLVSVGVVKPAIWIFAW). Residues 86–97 (SEHVVCSIGMLR) are Cytoplasmic-facing. A helical transmembrane segment spans residues 98-118 (FVNLLFSVGNFYLLYLLFHKV). Residues 119–126 (QPRNKAAS) are Extracellular-facing. A helical transmembrane segment spans residues 127-147 (SIQRVLSTLTLAVFPTLYFFN). Over 148 to 150 (FLY) the chain is Cytoplasmic. Residues 151 to 171 (YTEAGSMFFTLFAYLMCLYGN) form a helical membrane-spanning segment. Topologically, residues 172–175 (HKTS) are extracellular. The chain crosses the membrane as a helical span at residues 176-196 (AFLGFCGFMFRQTNIIWAVFC). Over 197–256 (AGNVIAQKLTEAWKTELQKKEDRLPPIKGPFAEFRKILQFLLAYSMSFKNLSMLFCLTWP) the chain is Cytoplasmic. A helical transmembrane segment spans residues 257 to 277 (YILLGFLFCAFVVVNGGIVIG). Residues 278-283 (DRSSHE) lie on the Extracellular side of the membrane. Residues 284–304 (ACLHFPQLFYFFSFTLFFSFP) traverse the membrane as a helical segment. At 305–317 (HLLSPSKIKTFLS) the chain is on the cytoplasmic side. A helical transmembrane segment spans residues 318-338 (LVWKHGILFLVVTLVSVFLVW). Residues 339-365 (KFTYAHKYLLADNRHYTFYVWKRVFQR) are Extracellular-facing. Residues 366-386 (YAILKYLLVPAYIFAGWSIAD) form a helical membrane-spanning segment. Over 387–392 (SLKSKP) the chain is Cytoplasmic. The helical transmembrane segment at 393–413 (IFWNLMFFICLFIVIVPQKLL) threads the bilayer. Over 414-436 (EFRYFILPYVIYRLNITLPPTSR) the chain is Extracellular. A helical transmembrane segment spans residues 437-457 (LVCELSCYAIVNFITFYIFLN). At 458–473 (KTFQWPNSQDIQRFMW) the chain is on the cytoplasmic side.

The protein belongs to the ALG10 glucosyltransferase family. Interacts with KCNH1; may regulate KCNH1, possibly by regulating its N-glycosylation. Interacts with KCNH2; may reduce KCNH2 sensitivity to classic proarrhythmic drug blockade, possibly by regulating its N-glycosylation. As to expression, highly expressed in heart, placenta, liver, kidney and pancreas. Weakly expressed in lung, skeletal muscle and brain.

It is found in the endoplasmic reticulum membrane. The enzyme catalyses an alpha-D-Glc-(1-&gt;3)-alpha-D-Glc-(1-&gt;3)-alpha-D-Man-(1-&gt;2)-alpha-D-Man-(1-&gt;2)-alpha-D-Man-(1-&gt;3)-[alpha-D-Man-(1-&gt;2)-alpha-D-Man-(1-&gt;3)-[alpha-D-Man-(1-&gt;2)-alpha-D-Man-(1-&gt;6)]-alpha-D-Man-(1-&gt;6)]-beta-D-Man-(1-&gt;4)-beta-D-GlcNAc-(1-&gt;4)-alpha-D-GlcNAc-diphospho-di-trans,poly-cis-dolichol + a di-trans,poly-cis-dolichyl beta-D-glucosyl phosphate = a alpha-D-Glc-(1-&gt;2)-alpha-D-Glc-(1-&gt;3)-alpha-D-Glc-(1-&gt;3)-alpha-D-Man-(1-&gt;2)-alpha-D-Man-(1-&gt;2)-alpha-D-Man-(1-&gt;3)-[alpha-D-Man-(1-&gt;2)-alpha-D-Man-(1-&gt;3)-[alpha-D-Man-(1-&gt;2)-alpha-D-Man-(1-&gt;6)]-alpha-D-Man-(1-&gt;6)]-beta-D-Man-(1-&gt;4)-beta-D-GlcNAc-(1-&gt;4)-alpha-D-GlcNAc-diphospho-di-trans,poly-cis-dolichol + a di-trans,poly-cis-dolichyl phosphate + H(+). The protein operates within protein modification; protein glycosylation. Dol-P-Glc:Glc(2)Man(9)GlcNAc(2)-PP-Dol alpha-1,2-glucosyltransferase that operates in the biosynthetic pathway of dolichol-linked oligosaccharides, the glycan precursors employed in protein asparagine (N)-glycosylation. The assembly of dolichol-linked oligosaccharides begins on the cytosolic side of the endoplasmic reticulum membrane and finishes in its lumen. The sequential addition of sugars to dolichol pyrophosphate produces dolichol-linked oligosaccharides containing fourteen sugars, including two GlcNAcs, nine mannoses and three glucoses. Once assembled, the oligosaccharide is transferred from the lipid to nascent proteins by oligosaccharyltransferases. In the lumen of the endoplasmic reticulum, adds the third and last glucose residue from dolichyl phosphate glucose (Dol-P-Glc) onto the lipid-linked oligosaccharide intermediate Glc(2)Man(9)GlcNAc(2)-PP-Dol to produce Glc(3)Man(9)GlcNAc(2)-PP-Dol. This chain is Dol-P-Glc:Glc(2)Man(9)GlcNAc(2)-PP-Dol alpha-1,2-glucosyltransferase, found in Homo sapiens (Human).